We begin with the raw amino-acid sequence, 536 residues long: uncharacterized protein (536 aa).

The segment at 71 to 98 (LFVIVKSGCSCPSGRICRHMLAVFLYVY) adopts an SWIM-type zinc-finger fold. Residues 482–528 (YKEAARYLKKLRTLYKKAKKQKVWERYIQLLSSHYKRLRALQEELQK) adopt a coiled-coil conformation.

This is an uncharacterized protein from Bacillus subtilis (strain 168).